The chain runs to 489 residues: Glutamate--tRNA ligase (489 aa).

A 'HIGH' region motif is present at residues 11–21 (PSPTGHLHIGG). Cys-108, Cys-110, Cys-136, and His-138 together coordinate Zn(2+). Positions 253 to 257 (KLSKR) match the 'KMSKS' region motif. Lys-256 provides a ligand contact to ATP.

This sequence belongs to the class-I aminoacyl-tRNA synthetase family. Glutamate--tRNA ligase type 1 subfamily. In terms of assembly, monomer. The cofactor is Zn(2+).

It localises to the cytoplasm. The enzyme catalyses tRNA(Glu) + L-glutamate + ATP = L-glutamyl-tRNA(Glu) + AMP + diphosphate. Its function is as follows. Catalyzes the attachment of glutamate to tRNA(Glu) in a two-step reaction: glutamate is first activated by ATP to form Glu-AMP and then transferred to the acceptor end of tRNA(Glu). The sequence is that of Glutamate--tRNA ligase from Geobacillus thermodenitrificans (strain NG80-2).